A 172-amino-acid chain; its full sequence is ATP synthase subunit b (172 aa).

A helical transmembrane segment spans residues 17 to 37; sequence IVFSAIVLAIVLPFFWWFVIP.

This sequence belongs to the ATPase B chain family. F-type ATPases have 2 components, F(1) - the catalytic core - and F(0) - the membrane proton channel. F(1) has five subunits: alpha(3), beta(3), gamma(1), delta(1), epsilon(1). F(0) has three main subunits: a(1), b(2) and c(10-14). The alpha and beta chains form an alternating ring which encloses part of the gamma chain. F(1) is attached to F(0) by a central stalk formed by the gamma and epsilon chains, while a peripheral stalk is formed by the delta and b chains.

It is found in the cell membrane. Its function is as follows. F(1)F(0) ATP synthase produces ATP from ADP in the presence of a proton or sodium gradient. F-type ATPases consist of two structural domains, F(1) containing the extramembraneous catalytic core and F(0) containing the membrane proton channel, linked together by a central stalk and a peripheral stalk. During catalysis, ATP synthesis in the catalytic domain of F(1) is coupled via a rotary mechanism of the central stalk subunits to proton translocation. Functionally, component of the F(0) channel, it forms part of the peripheral stalk, linking F(1) to F(0). The chain is ATP synthase subunit b from Tropheryma whipplei (strain TW08/27) (Whipple's bacillus).